The primary structure comprises 354 residues: Glycerol-1-phosphate dehydrogenase [NAD(P)+] (354 aa).

NAD(+) is bound by residues 103-107 (GRAVD) and 125-128 (TAAS). Asp-130 contributes to the substrate binding site. Position 134 (Ser-134) interacts with NAD(+). Residue Asp-176 participates in substrate binding. Zn(2+) is bound by residues Asp-176 and His-255. A substrate-binding site is contributed by His-259. His-271 serves as a coordination point for Zn(2+).

It belongs to the glycerol-1-phosphate dehydrogenase family. Homodimer. It depends on Zn(2+) as a cofactor.

The protein localises to the cytoplasm. The enzyme catalyses sn-glycerol 1-phosphate + NAD(+) = dihydroxyacetone phosphate + NADH + H(+). The catalysed reaction is sn-glycerol 1-phosphate + NADP(+) = dihydroxyacetone phosphate + NADPH + H(+). It participates in membrane lipid metabolism; glycerophospholipid metabolism. Catalyzes the NAD(P)H-dependent reduction of dihydroxyacetonephosphate (DHAP or glycerone phosphate) to glycerol 1-phosphate (G1P). The G1P thus generated is used as the glycerophosphate backbone of phospholipids in the cellular membranes of Archaea. The protein is Glycerol-1-phosphate dehydrogenase [NAD(P)+] of Cenarchaeum symbiosum (strain A).